The following is a 536-amino-acid chain: MEFSSPSREECPKPSGRVNIMAGSLTGLLLLQAVSWASGARPCIPKSFGYSSVVCVCNATYCDSLDPLTFPALGTFSRYESTRSGRRMELSTGTIQANHTGTGLLLTLQPEQKFQKVKGFGGAMTDAAALNILALSPPAQNLLLKSYFSEEGIGYNIIRVPMASCDFSIRTYTYADTPDDFQLHNFSLPEEDTKLKIPLIHRALQLARRPVSLLASPWTSPTWLKTNGAVNGKGSLKGQPGDIYHQTWARYFVKFLDAYAEHKLQFWAVTAENEPSAGLLSGYPFQCLGFTPEHQRDFIARDLGPTLANSTHHNVRLLMLDDQRLLLPHWAKVVLTDPEAAKYVHGIAVHWYLDFLAPAKATLGETHHLFPNTMLFASEACVGSKFWEQSVRLGSWDRGMQYSHSIITNLLYHVVGWTDWNLALNPEGGPNWVRNFVDSPIIVDITKDTFYKQPMFYHLGHFSKFIPEGSQRVGLVASQKNDLDTVALMHPDGSAVVVVLNRSSKDVPLTIKDPAVGFLETISPGYSIHTYLWRRQ.

An N-terminal signal peptide occupies residues 1 to 39 (MEFSSPSREECPKPSGRVNIMAGSLTGLLLLQAVSWASG). 2 disulfides stabilise this stretch: Cys-43–Cys-55 and Cys-57–Cys-62. 3 N-linked (GlcNAc...) asparagine glycosylation sites follow: Asn-58, Asn-98, and Asn-185. Glu-274 serves as the catalytic Proton donor. Asn-309 is a glycosylation site (N-linked (GlcNAc...) asparagine). The active-site Nucleophile is Glu-379. Asn-501 is a glycosylation site (N-linked (GlcNAc...) asparagine).

The protein belongs to the glycosyl hydrolase 30 family. In terms of assembly, interacts with saposin-C. Interacts with SCARB2. Interacts with TCP1. Interacts with GRN; this interaction prevents aggregation of GBA1-SCARB2 complex via interaction with HSPA1A upon stress.

Its subcellular location is the lysosome membrane. The enzyme catalyses a beta-D-glucosyl-(1&lt;-&gt;1')-N-acylsphing-4-enine + H2O = an N-acylsphing-4-enine + D-glucose. It carries out the reaction a beta-D-galactosyl-(1&lt;-&gt;1')-N-acylsphing-4-enine + H2O = an N-acylsphing-4-enine + D-galactose. The catalysed reaction is cholesteryl 3-beta-D-glucoside + H2O = cholesterol + D-glucose. It catalyses the reaction a beta-D-glucosyl-(1&lt;-&gt;1')-N-acylsphing-4-enine + cholesterol = cholesteryl 3-beta-D-glucoside + an N-acylsphing-4-enine. The enzyme catalyses beta-D-glucosyl-N-(9Z-octadecenoyl)-sphing-4E-enine + cholesterol = N-(9Z-octadecenoyl)-sphing-4-enine + cholesteryl 3-beta-D-glucoside. It carries out the reaction beta-D-glucosyl-N-octanoylsphing-4E-enine + cholesterol = N-octanoylsphing-4-enine + cholesteryl 3-beta-D-glucoside. The catalysed reaction is beta-D-glucosyl-N-dodecanoylsphing-4-enine + cholesterol = N-dodecanoylsphing-4-enine + cholesteryl 3-beta-D-glucoside. It catalyses the reaction beta-D-glucosyl-(1&lt;-&gt;1)-N-octadecanoylsphing-4-enine + cholesterol = N-octadecanoylsphing-4-enine + cholesteryl 3-beta-D-glucoside. The enzyme catalyses beta-D-glucosyl-(1&lt;-&gt;1')-N-(15Z-tetracosenoyl)-sphing-4-enine + cholesterol = N-(15Z-tetracosenoyl)-sphing-4-enine + cholesteryl 3-beta-D-glucoside. It carries out the reaction a beta-D-galactosyl-(1&lt;-&gt;1')-N-acylsphing-4-enine + cholesterol = cholesteryl 3-beta-D-galactoside + an N-acylsphing-4-enine. The catalysed reaction is 1-(beta-D-galactosyl)-N-dodecanoylsphing-4-enine + cholesterol = cholesteryl 3-beta-D-galactoside + N-dodecanoylsphing-4-enine. It catalyses the reaction a beta-D-xylosyl-(1&lt;-&gt;1')-N-acylsphing-4-enine + cholesterol = cholesteryl 3-beta-D-xyloside + an N-acylsphing-4-enine. The enzyme catalyses beta-D-xylosyl-(1&lt;-&gt;1')-N-(9Z-octadecenoyl)-sphing-4-enine + cholesterol = cholesteryl 3-beta-D-xyloside + N-(9Z-octadecenoyl)-sphing-4-enine. It participates in steroid metabolism; cholesterol metabolism. The protein operates within sphingolipid metabolism. In terms of biological role, glucosylceramidase that catalyzes, within the lysosomal compartment, the hydrolysis of glucosylceramides/GlcCers (such as beta-D-glucosyl-(1&lt;-&gt;1')-N-acylsphing-4-enine) into free ceramides (such as N-acylsphing-4-enine) and glucose. Plays a central role in the degradation of complex lipids and the turnover of cellular membranes. Through the production of ceramides, participates in the PKC-activated salvage pathway of ceramide formation. Catalyzes the glucosylation of cholesterol, through a transglucosylation reaction where glucose is transferred from GlcCer to cholesterol. GlcCer containing mono-unsaturated fatty acids (such as beta-D-glucosyl-N-(9Z-octadecenoyl)-sphing-4-enine) are preferred as glucose donors for cholesterol glucosylation when compared with GlcCer containing same chain length of saturated fatty acids (such as beta-D-glucosyl-N-octadecanoyl-sphing-4-enine). Under specific conditions, may alternatively catalyze the reverse reaction, transferring glucose from cholesteryl 3-beta-D-glucoside to ceramide. Can also hydrolyze cholesteryl 3-beta-D-glucoside producing glucose and cholesterol. Catalyzes the hydrolysis of galactosylceramides/GalCers (such as beta-D-galactosyl-(1&lt;-&gt;1')-N-acylsphing-4-enine), as well as the transfer of galactose between GalCers and cholesterol in vitro, but with lower activity than with GlcCers. Contrary to GlcCer and GalCer, xylosylceramide/XylCer (such as beta-D-xyosyl-(1&lt;-&gt;1')-N-acylsphing-4-enine) is not a good substrate for hydrolysis, however it is a good xylose donor for transxylosylation activity to form cholesteryl 3-beta-D-xyloside. The protein is Lysosomal acid glucosylceramidase (GBA1) of Pongo abelii (Sumatran orangutan).